The following is a 207-amino-acid chain: Ribosomal RNA large subunit methyltransferase E (207 aa).

G60, W62, D80, D96, and D121 together coordinate S-adenosyl-L-methionine. Catalysis depends on K161, which acts as the Proton acceptor.

This sequence belongs to the class I-like SAM-binding methyltransferase superfamily. RNA methyltransferase RlmE family.

It is found in the cytoplasm. The catalysed reaction is uridine(2552) in 23S rRNA + S-adenosyl-L-methionine = 2'-O-methyluridine(2552) in 23S rRNA + S-adenosyl-L-homocysteine + H(+). Functionally, specifically methylates the uridine in position 2552 of 23S rRNA at the 2'-O position of the ribose in the fully assembled 50S ribosomal subunit. This is Ribosomal RNA large subunit methyltransferase E from Ectopseudomonas mendocina (strain ymp) (Pseudomonas mendocina).